We begin with the raw amino-acid sequence, 540 residues long: Cobalt-factor III methyltransferase (540 aa).

C402, C405, C439, and C443 together coordinate [4Fe-4S] cluster.

The protein in the N-terminal section; belongs to the precorrin methyltransferase family. It depends on [4Fe-4S] cluster as a cofactor.

It carries out the reaction Co(II)-factor III + AH2 + S-adenosyl-L-methionine = Co-precorrin-4 + A + S-adenosyl-L-homocysteine. It participates in cofactor biosynthesis; adenosylcobalamin biosynthesis. Methyltransferase that catalyzes the reduction, ring contraction and methylation of C-17 in cobalt-factor III to form cobalt-precorrin-4. Is also able to convert cobalt-precorrin-3 to cobalt-precorrin-4. The chain is Cobalt-factor III methyltransferase (cbiH60) from Priestia megaterium (Bacillus megaterium).